Reading from the N-terminus, the 566-residue chain is Urease subunit alpha (566 aa).

Residues 128–566 (GGVDTHIHFI…LPMAQRYFLF (439 aa)) enclose the Urease domain. Ni(2+) is bound by residues His133, His135, and Lys216. The residue at position 216 (Lys216) is an N6-carboxylysine. His218 lines the substrate pocket. Ni(2+) contacts are provided by His245 and His271. His319 (proton donor) is an active-site residue. Ni(2+) is bound at residue Asp359.

This sequence belongs to the metallo-dependent hydrolases superfamily. Urease alpha subunit family. In terms of assembly, may form a heterohexamer of 3 UreC (alpha) and 3 UreAB (gamma/beta) subunits. May also form a heterotrimer of UreA (gamma), UreB (beta) and UreC (alpha) subunits. Three heterotrimers associate to form the active enzyme. Ni cation is required as a cofactor. In terms of processing, carboxylation allows a single lysine to coordinate two nickel ions.

The protein localises to the cytoplasm. It catalyses the reaction urea + 2 H2O + H(+) = hydrogencarbonate + 2 NH4(+). It participates in nitrogen metabolism; urea degradation; CO(2) and NH(3) from urea (urease route): step 1/1. This is Urease subunit alpha from Pseudomonas savastanoi pv. phaseolicola (strain 1448A / Race 6) (Pseudomonas syringae pv. phaseolicola (strain 1448A / Race 6)).